Consider the following 290-residue polypeptide: 4-diphosphocytidyl-2-C-methyl-D-erythritol kinase (290 aa).

The active site involves lysine 13. 96–106 (PMGGGIGGGSS) serves as a coordination point for ATP. The active site involves aspartate 138.

Belongs to the GHMP kinase family. IspE subfamily.

It catalyses the reaction 4-CDP-2-C-methyl-D-erythritol + ATP = 4-CDP-2-C-methyl-D-erythritol 2-phosphate + ADP + H(+). It functions in the pathway isoprenoid biosynthesis; isopentenyl diphosphate biosynthesis via DXP pathway; isopentenyl diphosphate from 1-deoxy-D-xylulose 5-phosphate: step 3/6. Functionally, catalyzes the phosphorylation of the position 2 hydroxy group of 4-diphosphocytidyl-2C-methyl-D-erythritol. In Vibrio vulnificus (strain CMCP6), this protein is 4-diphosphocytidyl-2-C-methyl-D-erythritol kinase.